A 387-amino-acid polypeptide reads, in one-letter code: Chaperone protein DnaJ (387 aa).

Positions 5–70 constitute a J domain; it reads DYYEVLGVAK…QKRAAYDRFG (66 aa). A CR-type zinc finger spans residues 140–218; the sequence is GKTETIRLPT…CGGAGRVTRE (79 aa). 8 residues coordinate Zn(2+): Cys153, Cys156, Cys170, Cys173, Cys192, Cys195, Cys206, and Cys209. 4 CXXCXGXG motif repeats span residues 153-160, 170-177, 192-199, and 206-213; these read CEVCAGSG, CPTCGGYG, CPNCQGRG, and CAACGGAG.

Belongs to the DnaJ family. Homodimer. The cofactor is Zn(2+).

The protein localises to the cytoplasm. Its function is as follows. Participates actively in the response to hyperosmotic and heat shock by preventing the aggregation of stress-denatured proteins and by disaggregating proteins, also in an autonomous, DnaK-independent fashion. Unfolded proteins bind initially to DnaJ; upon interaction with the DnaJ-bound protein, DnaK hydrolyzes its bound ATP, resulting in the formation of a stable complex. GrpE releases ADP from DnaK; ATP binding to DnaK triggers the release of the substrate protein, thus completing the reaction cycle. Several rounds of ATP-dependent interactions between DnaJ, DnaK and GrpE are required for fully efficient folding. Also involved, together with DnaK and GrpE, in the DNA replication of plasmids through activation of initiation proteins. This Methylobacterium sp. (strain 4-46) protein is Chaperone protein DnaJ.